The following is a 68-amino-acid chain: uncharacterized protein (68 aa).

Residues 2–67 (KTITLNIKGI…VIEDAGFDAT (66 aa)) enclose the HMA domain. Residues Cys-13 and Cys-16 each contribute to the a metal cation site.

This is an uncharacterized protein from Haemophilus influenzae (strain ATCC 51907 / DSM 11121 / KW20 / Rd).